The sequence spans 814 residues: MPSTPLSAAVEALSEDAAQARHAELSRAIERANQLYYNEDAPELTDAEYDALRQELEAIEARFPALTGTTEASAGVGAKPSEKFAKVRHAVPMLSLGNAFADEDVDEFVARVRRFLNLPAEESVAFTAEPKIDGLSLSLRYEAGRLVTAATRGDGEVGENVTANALTVDDIPETLSGENIPEVLEVRGEVYLSHEDFAAINARQEAAGKPLFANPRNAAAGSLRQLDPAITASRPLRFFAYAWGEVSEPFTDTQSAVLERFRGWGLPVNPRTKLCRSAEEMIAHYRTIEAERAGLGYDIDGVVYKVDDLGFQRRLGFVSRAPRWALAHKFAAQEAITELLAIDINVGRTGSLNPLARLKPVTVGGVVVSNATLHNEGYVQGVGADGEPIREGRDIRVGDTVIVVRAGDVIPKVRDVVIEKRPADAVPYVFPDTCPACGSRAVRELNPRTKKLDAIRRCTGGLICPAQGVERLKHFVSRNGFDLEGFGQTYIEVLFEAGLVKQPADLFRLEFEPLKAAIVARRETLSAQRRSEGEPAPKKPTKKKGEEEDKAIKNLLASLDARRTIPLNRFLFALGIPQIGESTAKALAKRFPDMPSLMAALEAATREQAGRDWLELSALPRIGPGTRDRLFETLDPLPGEAMQDLSLGARLRGRLTPSQREAVLAHYGSEEKVDAALERAASQRPGDAYRLFADDGEIGPVATDSLIQFFSEPHNDAAVRALLEEVGTEPLATTTSAAAFAGKTVVFTGSLEKMTRSEAKATAERLGAKVSGSVSAKTDLVVAGPGAGSKLKDAEKHGVKVVSEDDWLAMLAEA.

NAD(+)-binding positions include 46-50 (DAEYD), 95-96 (SL), and Glu129. The active-site N6-AMP-lysine intermediate is Lys131. Residues Arg152, Glu189, Lys305, and Lys329 each contribute to the NAD(+) site. Zn(2+) contacts are provided by Cys434, Cys437, Cys458, and Cys464. The disordered stretch occupies residues 525–548 (LSAQRRSEGEPAPKKPTKKKGEEE). The region spanning 735 to 814 (TSAAAFAGKT…DDWLAMLAEA (80 aa)) is the BRCT domain.

This sequence belongs to the NAD-dependent DNA ligase family. LigA subfamily. Requires Mg(2+) as cofactor. It depends on Mn(2+) as a cofactor.

The catalysed reaction is NAD(+) + (deoxyribonucleotide)n-3'-hydroxyl + 5'-phospho-(deoxyribonucleotide)m = (deoxyribonucleotide)n+m + AMP + beta-nicotinamide D-nucleotide.. DNA ligase that catalyzes the formation of phosphodiester linkages between 5'-phosphoryl and 3'-hydroxyl groups in double-stranded DNA using NAD as a coenzyme and as the energy source for the reaction. It is essential for DNA replication and repair of damaged DNA. This chain is DNA ligase, found in Methylorubrum extorquens (strain PA1) (Methylobacterium extorquens).